A 494-amino-acid chain; its full sequence is Ketol-acid reductoisomerase (NADP(+)) (494 aa).

Residues 14 to 208 enclose the KARI N-terminal Rossmann domain; it reads LEQLGKCRFM…GGHRAGVLQS (195 aa). NADP(+) contacts are provided by residues 45–48, Arg-68, Arg-76, Ser-78, and 108–110; these read CGAQ and DKQ. The active site involves His-132. An NADP(+)-binding site is contributed by Gly-158. KARI C-terminal knotted domains lie at 209–344 and 345–487; these read SFVA…NAPA and FDGA…MKDM. Mg(2+)-binding residues include Asp-217, Glu-221, Glu-389, and Glu-393. Ser-414 contributes to the substrate binding site.

It belongs to the ketol-acid reductoisomerase family. Requires Mg(2+) as cofactor.

The enzyme catalyses (2R)-2,3-dihydroxy-3-methylbutanoate + NADP(+) = (2S)-2-acetolactate + NADPH + H(+). It carries out the reaction (2R,3R)-2,3-dihydroxy-3-methylpentanoate + NADP(+) = (S)-2-ethyl-2-hydroxy-3-oxobutanoate + NADPH + H(+). The protein operates within amino-acid biosynthesis; L-isoleucine biosynthesis; L-isoleucine from 2-oxobutanoate: step 2/4. It functions in the pathway amino-acid biosynthesis; L-valine biosynthesis; L-valine from pyruvate: step 2/4. Its function is as follows. Involved in the biosynthesis of branched-chain amino acids (BCAA). Catalyzes an alkyl-migration followed by a ketol-acid reduction of (S)-2-acetolactate (S2AL) to yield (R)-2,3-dihydroxy-isovalerate. In the isomerase reaction, S2AL is rearranged via a Mg-dependent methyl migration to produce 3-hydroxy-3-methyl-2-ketobutyrate (HMKB). In the reductase reaction, this 2-ketoacid undergoes a metal-dependent reduction by NADPH to yield (R)-2,3-dihydroxy-isovalerate. This Tolumonas auensis (strain DSM 9187 / NBRC 110442 / TA 4) protein is Ketol-acid reductoisomerase (NADP(+)).